The primary structure comprises 612 residues: Peroxisomal carnitine O-octanoyltransferase (612 aa).

Methionine 1 bears the N-acetylmethionine mark. Lysine 40 and lysine 57 each carry N6-succinyllysine. Residue histidine 327 is the Proton acceptor of the active site. Residues lysine 406 and 410 to 417 (KEEALHPD) contribute to the CoA site. Position 406 is an N6-acetyllysine; alternate (lysine 406). At lysine 406 the chain carries N6-succinyllysine; alternate. (R)-carnitine contacts are provided by tyrosine 439, threonine 441, and threonine 452. Positions 610 to 612 (AHL) match the Microbody targeting signal motif.

It belongs to the carnitine/choline acetyltransferase family.

It is found in the peroxisome. It catalyses the reaction octanoyl-CoA + (R)-carnitine = O-octanoyl-(R)-carnitine + CoA. It carries out the reaction 4,8-dimethylnonanoyl-CoA + (R)-carnitine = O-4,8-dimethylnonanoyl-(R)-carnitine + CoA. It participates in lipid metabolism; fatty acid beta-oxidation. Functionally, beta-oxidation of fatty acids. The highest activity concerns the C6 to C10 chain length substrate. In Mus musculus (Mouse), this protein is Peroxisomal carnitine O-octanoyltransferase (Crot).